A 157-amino-acid chain; its full sequence is Protein AE7 (157 aa).

Belongs to the MIP18 family. As to quaternary structure, part of a complex formed of AE7, CIA1, MMS19 and NAR1. Interacts with CIA1 and MMS19, but not with NAR1. In terms of tissue distribution, expressed in the embryo, shoot apical meristem, leaf primordia, inflorescence and all floral organs.

It is found in the nucleus. The protein resides in the cytoplasm. Its function is as follows. Central member of the cytosolic iron-sulfur (Fe-S) protein assembly (CIA) pathway. Involved in leaf polarity formation. Promotes leaf adaxial identity. May play a role in the cell cycle progression and is required for cell proliferation. The protein is Protein AE7 of Arabidopsis thaliana (Mouse-ear cress).